Here is an 82-residue protein sequence, read N- to C-terminus: ATP synthase subunit c, chloroplastic (82 aa).

The next 2 membrane-spanning stretches (helical) occupy residues 3-23 (PLIA…ASIG) and 57-77 (LAFM…LLFA).

Belongs to the ATPase C chain family. In terms of assembly, F-type ATPases have 2 components, F(1) - the catalytic core - and F(0) - the membrane proton channel. F(1) has five subunits: alpha(3), beta(3), gamma(1), delta(1), epsilon(1). F(0) has four main subunits: a(1), b(1), b'(1) and c(10-14). The alpha and beta chains form an alternating ring which encloses part of the gamma chain. F(1) is attached to F(0) by a central stalk formed by the gamma and epsilon chains, while a peripheral stalk is formed by the delta, b and b' chains.

It localises to the plastid. It is found in the chloroplast thylakoid membrane. Functionally, f(1)F(0) ATP synthase produces ATP from ADP in the presence of a proton or sodium gradient. F-type ATPases consist of two structural domains, F(1) containing the extramembraneous catalytic core and F(0) containing the membrane proton channel, linked together by a central stalk and a peripheral stalk. During catalysis, ATP synthesis in the catalytic domain of F(1) is coupled via a rotary mechanism of the central stalk subunits to proton translocation. Its function is as follows. Key component of the F(0) channel; it plays a direct role in translocation across the membrane. A homomeric c-ring of between 10-14 subunits forms the central stalk rotor element with the F(1) delta and epsilon subunits. In Nephroselmis olivacea (Green alga), this protein is ATP synthase subunit c, chloroplastic.